Reading from the N-terminus, the 347-residue chain is D-alanine--D-alanine ligase (347 aa).

The region spanning 133–342 is the ATP-grasp domain; it reads KQAFAQASLP…FPDLVHRLIQ (210 aa). 169 to 224 is a binding site for ATP; the sequence is ETELGYPCFVKPANLGSSVGIAKVRDRAELEAALDQAAALDRRLIIEAAIDNPREV. Mg(2+)-binding residues include Asp296, Glu309, and Asn311.

Belongs to the D-alanine--D-alanine ligase family. Requires Mg(2+) as cofactor. It depends on Mn(2+) as a cofactor.

The protein resides in the cytoplasm. The catalysed reaction is 2 D-alanine + ATP = D-alanyl-D-alanine + ADP + phosphate + H(+). It participates in cell wall biogenesis; peptidoglycan biosynthesis. Functionally, cell wall formation. The protein is D-alanine--D-alanine ligase of Synechococcus elongatus (strain ATCC 33912 / PCC 7942 / FACHB-805) (Anacystis nidulans R2).